The sequence spans 348 residues: Peroxidase 40 (348 aa).

A signal peptide spans 1–21 (MKNLFNLFLMFFFAMPILSLS). N26 is a glycosylation site (N-linked (GlcNAc...) asparagine). Cystine bridges form between C59/C139, C92/C97, C145/C344, and C224/C256. The Proton acceptor role is filled by H90. Ca(2+)-binding residues include D91, V94, G96, D98, and S100. The disordered stretch occupies residues 170-189 (GRKDSRTASKQAATNGLPSP). Polar residues predominate over residues 177–189 (ASKQAATNGLPSP). P187 serves as a coordination point for substrate. N190 carries N-linked (GlcNAc...) asparagine glycosylation. H217 lines the heme b pocket. A Ca(2+)-binding site is contributed by T218. Residues D269, T272, and D277 each coordinate Ca(2+).

Belongs to the peroxidase family. Classical plant (class III) peroxidase subfamily. Heme b serves as cofactor. Ca(2+) is required as a cofactor.

The protein localises to the secreted. It carries out the reaction 2 a phenolic donor + H2O2 = 2 a phenolic radical donor + 2 H2O. Functionally, removal of H(2)O(2), oxidation of toxic reductants, biosynthesis and degradation of lignin, suberization, auxin catabolism, response to environmental stresses such as wounding, pathogen attack and oxidative stress. These functions might be dependent on each isozyme/isoform in each plant tissue. This Arabidopsis thaliana (Mouse-ear cress) protein is Peroxidase 40 (PER40).